The sequence spans 89 residues: Small ribosomal subunit protein uS15 (89 aa).

The protein belongs to the universal ribosomal protein uS15 family. As to quaternary structure, part of the 30S ribosomal subunit. Forms a bridge to the 50S subunit in the 70S ribosome, contacting the 23S rRNA.

Functionally, one of the primary rRNA binding proteins, it binds directly to 16S rRNA where it helps nucleate assembly of the platform of the 30S subunit by binding and bridging several RNA helices of the 16S rRNA. Forms an intersubunit bridge (bridge B4) with the 23S rRNA of the 50S subunit in the ribosome. This chain is Small ribosomal subunit protein uS15, found in Frankia alni (strain DSM 45986 / CECT 9034 / ACN14a).